A 112-amino-acid chain; its full sequence is Protein lin-52 homolog (112 aa).

This sequence belongs to the lin-52 family. Component of the DREAM complex.

In Tetraodon nigroviridis (Spotted green pufferfish), this protein is Protein lin-52 homolog (lin52).